We begin with the raw amino-acid sequence, 105 residues long: MSALTRLVPFGRVGGRLLRGCRARAAGDSGVRHAGGGVHIQPRYREFPQLTRSQVIQGEFLSSLMWFWILWRFWHDSDAVLGHFSYPDPSQWTDEELGIPPDDED.

The N-terminal 33 residues, 1–33 (MSALTRLVPFGRVGGRLLRGCRARAAGDSGVRH), are a transit peptide targeting the mitochondrion. Residues 86-105 (YPDPSQWTDEELGIPPDDED) are disordered. The span at 93 to 105 (TDEELGIPPDDED) shows a compositional bias: acidic residues.

This sequence belongs to the complex I NDUFB2 subunit family. Complex I is composed of 45 different subunits.

The protein localises to the mitochondrion inner membrane. Accessory subunit of the mitochondrial membrane respiratory chain NADH dehydrogenase (Complex I), that is believed not to be involved in catalysis. Complex I functions in the transfer of electrons from NADH to the respiratory chain. The immediate electron acceptor for the enzyme is believed to be ubiquinone. This chain is NADH dehydrogenase [ubiquinone] 1 beta subcomplex subunit 2, mitochondrial (Ndufb2), found in Mus musculus (Mouse).